Reading from the N-terminus, the 351-residue chain is Transaldolase (351 aa).

The active-site Schiff-base intermediate with substrate is the Lys138.

This sequence belongs to the transaldolase family. Type 2 subfamily.

Its subcellular location is the cytoplasm. It carries out the reaction D-sedoheptulose 7-phosphate + D-glyceraldehyde 3-phosphate = D-erythrose 4-phosphate + beta-D-fructose 6-phosphate. Its pathway is carbohydrate degradation; pentose phosphate pathway; D-glyceraldehyde 3-phosphate and beta-D-fructose 6-phosphate from D-ribose 5-phosphate and D-xylulose 5-phosphate (non-oxidative stage): step 2/3. Transaldolase is important for the balance of metabolites in the pentose-phosphate pathway. In Neisseria meningitidis serogroup A / serotype 4A (strain DSM 15465 / Z2491), this protein is Transaldolase (tal).